A 124-amino-acid polypeptide reads, in one-letter code: MIYGIGVDVTDLARIQAAQEKNSGFAVKILTPTELANYQQLDGRRAVEYLSGRFSAKESYSKAFGTGLGKVALQDVEILNNELGKPILTKHPFSGQAFVSISHSETLVFTEVILEKEGPERDDR.

Residues aspartate 8 and glutamate 58 each contribute to the Mg(2+) site.

It belongs to the P-Pant transferase superfamily. AcpS family. It depends on Mg(2+) as a cofactor.

It is found in the cytoplasm. It carries out the reaction apo-[ACP] + CoA = holo-[ACP] + adenosine 3',5'-bisphosphate + H(+). In terms of biological role, transfers the 4'-phosphopantetheine moiety from coenzyme A to a Ser of acyl-carrier-protein. This is Holo-[acyl-carrier-protein] synthase from Lacticaseibacillus casei (strain BL23) (Lactobacillus casei).